A 410-amino-acid chain; its full sequence is Dihydrolipoyllysine-residue acetyltransferase component of pyruvate dehydrogenase complex (410 aa).

In terms of domain architecture, Lipoyl-binding spans 1 to 69 (MPDIGTDLVE…TTGSLIAILN (69 aa)). K35 is subject to N6-lipoyllysine. The interval 81–100 (SSSYSFKNSKNTSTNSNLGN) is disordered. The region spanning 113–150 (HATPTVRRLARKFDIKLENITGTGRKGRILKEDVISYK) is the Peripheral subunit-binding (PSBD) domain. The active site involves H383.

This sequence belongs to the 2-oxoacid dehydrogenase family. In terms of assembly, forms a 24-polypeptide structural core with octahedral symmetry. It depends on (R)-lipoate as a cofactor.

It carries out the reaction N(6)-[(R)-dihydrolipoyl]-L-lysyl-[protein] + acetyl-CoA = N(6)-[(R)-S(8)-acetyldihydrolipoyl]-L-lysyl-[protein] + CoA. Its function is as follows. The pyruvate dehydrogenase complex catalyzes the overall conversion of pyruvate to acetyl-CoA and CO(2). It contains multiple copies of three enzymatic components: pyruvate dehydrogenase (E1), dihydrolipoamide acetyltransferase (E2) and lipoamide dehydrogenase (E3). The polypeptide is Dihydrolipoyllysine-residue acetyltransferase component of pyruvate dehydrogenase complex (aceF) (Buchnera aphidicola subsp. Baizongia pistaciae (strain Bp)).